A 145-amino-acid chain; its full sequence is MKILVINGPNINFLGIREKAIYGKEDYPYLLSLLEGKAKKEGIEIVTFQSNGEGEIIDRIQEAYSDQTDAIIINPGAYTHYSYAIRDALASIEIPKIEVHISNVHKREEFRHVSVTAPVCTGQIVGLGLQGYLLAIDAIISMNIG.

Catalysis depends on Tyr22, which acts as the Proton acceptor. 3 residues coordinate substrate: Asn74, His80, and Asp87. Residue His100 is the Proton donor of the active site. Residues 101–102 (IS) and Arg111 contribute to the substrate site.

It belongs to the type-II 3-dehydroquinase family. Homododecamer.

The enzyme catalyses 3-dehydroquinate = 3-dehydroshikimate + H2O. It participates in metabolic intermediate biosynthesis; chorismate biosynthesis; chorismate from D-erythrose 4-phosphate and phosphoenolpyruvate: step 3/7. Catalyzes a trans-dehydration via an enolate intermediate. This chain is 3-dehydroquinate dehydratase, found in Lachnoclostridium phytofermentans (strain ATCC 700394 / DSM 18823 / ISDg) (Clostridium phytofermentans).